The following is a 237-amino-acid chain: Ribonuclease PH (237 aa).

Phosphate-binding positions include Arg-86 and 124-126 (GTR).

It belongs to the RNase PH family. As to quaternary structure, homohexameric ring arranged as a trimer of dimers.

The enzyme catalyses tRNA(n+1) + phosphate = tRNA(n) + a ribonucleoside 5'-diphosphate. Functionally, phosphorolytic 3'-5' exoribonuclease that plays an important role in tRNA 3'-end maturation. Removes nucleotide residues following the 3'-CCA terminus of tRNAs; can also add nucleotides to the ends of RNA molecules by using nucleoside diphosphates as substrates, but this may not be physiologically important. Probably plays a role in initiation of 16S rRNA degradation (leading to ribosome degradation) during starvation. This Shewanella sediminis (strain HAW-EB3) protein is Ribonuclease PH.